Consider the following 238-residue polypeptide: 4-hydroxy-tetrahydrodipicolinate reductase (238 aa).

12 to 17 (GASGRM) contributes to the NAD(+) binding site. Position 40 (R40) interacts with NADP(+). Residues 93-95 (GTT) and 117-120 (ASNF) each bind NAD(+). H149 functions as the Proton donor/acceptor in the catalytic mechanism. H150 is a binding site for (S)-2,3,4,5-tetrahydrodipicolinate. K153 acts as the Proton donor in catalysis. 159–160 (GT) lines the (S)-2,3,4,5-tetrahydrodipicolinate pocket.

Belongs to the DapB family.

It is found in the cytoplasm. It carries out the reaction (S)-2,3,4,5-tetrahydrodipicolinate + NAD(+) + H2O = (2S,4S)-4-hydroxy-2,3,4,5-tetrahydrodipicolinate + NADH + H(+). It catalyses the reaction (S)-2,3,4,5-tetrahydrodipicolinate + NADP(+) + H2O = (2S,4S)-4-hydroxy-2,3,4,5-tetrahydrodipicolinate + NADPH + H(+). The protein operates within amino-acid biosynthesis; L-lysine biosynthesis via DAP pathway; (S)-tetrahydrodipicolinate from L-aspartate: step 4/4. Functionally, catalyzes the conversion of 4-hydroxy-tetrahydrodipicolinate (HTPA) to tetrahydrodipicolinate. This is 4-hydroxy-tetrahydrodipicolinate reductase from Xanthomonas campestris pv. campestris (strain 8004).